We begin with the raw amino-acid sequence, 482 residues long: ATP synthase subunit beta (482 aa).

G168–T175 serves as a coordination point for ATP.

This sequence belongs to the ATPase alpha/beta chains family. As to quaternary structure, F-type ATPases have 2 components, CF(1) - the catalytic core - and CF(0) - the membrane proton channel. CF(1) has five subunits: alpha(3), beta(3), gamma(1), delta(1), epsilon(1). CF(0) has three main subunits: a(1), b(2) and c(9-12). The alpha and beta chains form an alternating ring which encloses part of the gamma chain. CF(1) is attached to CF(0) by a central stalk formed by the gamma and epsilon chains, while a peripheral stalk is formed by the delta and b chains.

It localises to the cell membrane. It catalyses the reaction ATP + H2O + 4 H(+)(in) = ADP + phosphate + 5 H(+)(out). Its function is as follows. Produces ATP from ADP in the presence of a proton gradient across the membrane. The catalytic sites are hosted primarily by the beta subunits. The sequence is that of ATP synthase subunit beta from Nocardia farcinica (strain IFM 10152).